The following is a 591-amino-acid chain: Cytidine monophosphate-N-acetylneuraminic acid hydroxylase (591 aa).

Residues 12-110 enclose the Rieske domain; that stretch reads LEAEDVRNLK…AVLSETDGSL (99 aa). The [2Fe-2S] cluster site is built by C52, H54, C73, and H76.

It belongs to the CMP-Neu5Ac hydroxylase family. [2Fe-2S] cluster is required as a cofactor.

It localises to the cytoplasm. It carries out the reaction CMP-N-acetyl-beta-neuraminate + 2 Fe(II)-[cytochrome b5] + O2 + 2 H(+) = CMP-N-glycoloyl-beta-neuraminate + 2 Fe(III)-[cytochrome b5] + H2O. Its pathway is amino-sugar metabolism; N-acetylneuraminate metabolism. In terms of biological role, sialic acids are components of carbohydrate chains of glycoconjugates and are involved in cell-cell recognition and cell-pathogen interactions. Catalyzes the conversion of CMP-N-acetylneuraminic acid (CMP-Neu5Ac) into its hydroxylated derivative CMP-N-glycolylneuraminic acid (CMP-Neu5Gc), a sialic acid abundantly expressed at the surface of many cells. This is Cytidine monophosphate-N-acetylneuraminic acid hydroxylase (cmah) from Danio rerio (Zebrafish).